We begin with the raw amino-acid sequence, 193 residues long: Zinc finger protein 740 (193 aa).

The tract at residues 33 to 75 (SKQAENGERAGSPDVLRCSSQGHRKDSDKSRSRKDDDSLSEAS) is disordered. A Glycyl lysine isopeptide (Lys-Gly) (interchain with G-Cter in SUMO2) cross-link involves residue Lys-34. A Phosphoserine modification is found at Ser-44. Residues 55 to 69 (HRKDSDKSRSRKDDD) show a composition bias toward basic and acidic residues. 2 consecutive C2H2-type zinc fingers follow at residues 101–123 (FVCE…ILIH) and 129–151 (FECD…KRVH). The segment at 157 to 179 (YQCERCHQCFSRTDRLLRHKRMC) adopts a C2H2-type 3; atypical zinc-finger fold.

The protein belongs to the krueppel C2H2-type zinc-finger protein family.

Its subcellular location is the nucleus. Functionally, may be involved in transcriptional regulation. The sequence is that of Zinc finger protein 740 (ZNF740) from Homo sapiens (Human).